Here is a 297-residue protein sequence, read N- to C-terminus: Protein BCCIP homolog (297 aa).

Residues 1 to 40 are disordered; the sequence is MSANKQKKLSTMEVDPNEDVSSSSEDDDDDEPHPDAYKGN.

This sequence belongs to the BCP1 family.

In Drosophila melanogaster (Fruit fly), this protein is Protein BCCIP homolog.